We begin with the raw amino-acid sequence, 101 residues long: Small ribosomal subunit protein uS14 (101 aa).

Belongs to the universal ribosomal protein uS14 family. In terms of assembly, part of the 30S ribosomal subunit. Contacts proteins S3 and S10.

In terms of biological role, binds 16S rRNA, required for the assembly of 30S particles and may also be responsible for determining the conformation of the 16S rRNA at the A site. This is Small ribosomal subunit protein uS14 from Alteromonas mediterranea (strain DSM 17117 / CIP 110805 / LMG 28347 / Deep ecotype).